Consider the following 959-residue polypeptide: DNA translocase FtsK 1 (959 aa).

The next 3 helical transmembrane spans lie at 1 to 21 (MGLGWFGISSVWLLPMVWRYV), 39 to 59 (IWLATLAVLCASASLEALTSG), and 83 to 103 (GWTGAFLLMLGVLLWVAPMVF). The Cytoplasmic segment spans residues 104 to 959 (GHSWRQLLAR…REVIAPGGGD (856 aa)). The disordered stretch occupies residues 122–427 (PVQADARHDE…AAPPPPAVPA (306 aa)). The segment covering 126–136 (DARHDEADDGL) has biased composition (basic and acidic residues). Composition is skewed to low complexity over residues 220–229 (ATPKAATQAP) and 264–286 (APSAPVEDAAPAISPAAEPDAPA). Over residues 287–298 (SAPPEPAEPSPP) the composition is skewed to pro residues. Residues 333 to 379 (PEPEPEPEAETEVTPEAEAEPEAEPEAEAEPEAEAEAEAEAEAEPEA) are compositionally biased toward acidic residues. A compositionally biased stretch (low complexity) spans 380–403 (EAPAPESVAPALQEAEAATAAEAP). Residues 605 to 814 (GNPVVTDLAR…FQVSSKIDSR (210 aa)) enclose the FtsK domain. An ATP-binding site is contributed by 625–630 (GSGKSV).

The protein belongs to the FtsK/SpoIIIE/SftA family. Homohexamer. Forms a ring that surrounds DNA.

It localises to the cell inner membrane. In terms of biological role, essential cell division protein that coordinates cell division and chromosome segregation. The N-terminus is involved in assembly of the cell-division machinery. The C-terminus functions as a DNA motor that moves dsDNA in an ATP-dependent manner towards the dif recombination site, which is located within the replication terminus region. Translocation stops specifically at Xer-dif sites, where FtsK interacts with the Xer recombinase, allowing activation of chromosome unlinking by recombination. FtsK orienting polar sequences (KOPS) guide the direction of DNA translocation. FtsK can remove proteins from DNA as it translocates, but translocation stops specifically at XerCD-dif site, thereby preventing removal of XerC and XerD from dif. The protein is DNA translocase FtsK 1 (ftsK1) of Ralstonia nicotianae (strain ATCC BAA-1114 / GMI1000) (Ralstonia solanacearum).